We begin with the raw amino-acid sequence, 212 residues long: Pyrrolidone-carboxylate peptidase (212 aa).

Active-site residues include Glu-78, Cys-141, and His-165.

This sequence belongs to the peptidase C15 family. As to quaternary structure, homotetramer.

Its subcellular location is the cytoplasm. The enzyme catalyses Release of an N-terminal pyroglutamyl group from a polypeptide, the second amino acid generally not being Pro.. Functionally, removes 5-oxoproline from various penultimate amino acid residues except L-proline. This Staphylococcus haemolyticus (strain JCSC1435) protein is Pyrrolidone-carboxylate peptidase.